Here is a 181-residue protein sequence, read N- to C-terminus: uncharacterized protein (181 aa).

The disordered stretch occupies residues 162 to 181 (QARGPAGTRTPQRRCSSHEA).

This is an uncharacterized protein from Homo sapiens (Human).